The chain runs to 128 residues: MCKVESPRSGVLLLRRIALERAERLLRLARTVYYEDPDRARRYVELARRIAMKARVKLPKHLKRSFCKRCNTPLIPGVTARVRLRQNRMPHVSVTCLECGYIYRYPYLREVKERRRRHMEGVKDRDAG.

The Zn(2+) site is built by Cys67, Cys70, Cys96, and Cys99.

This sequence belongs to the eukaryotic/archaeal RNase P protein component 4 family. In terms of assembly, consists of a catalytic RNA component and at least 4-5 protein subunits. Zn(2+) is required as a cofactor.

The protein localises to the cytoplasm. It catalyses the reaction Endonucleolytic cleavage of RNA, removing 5'-extranucleotides from tRNA precursor.. Functionally, part of ribonuclease P, a protein complex that generates mature tRNA molecules by cleaving their 5'-ends. In Methanopyrus kandleri (strain AV19 / DSM 6324 / JCM 9639 / NBRC 100938), this protein is Ribonuclease P protein component 4.